Consider the following 660-residue polypeptide: UvrABC system protein B (660 aa).

Residues 26 to 414 (KKVLAGQRHQ…PEMTEQIIRP (389 aa)) enclose the Helicase ATP-binding domain. 39–46 (GATGTGKT) contacts ATP. The Beta-hairpin motif lies at 92-115 (YYDYYQPEAYVPSTDTFIEKDASI). Residues 430–596 (QIDNLIEEIR…TIRKEVRDVI (167 aa)) form the Helicase C-terminal domain. Residues 624–659 (EKVIEQMENEMKQAAKDLDFEKAAELRDVILELKAE) form the UVR domain.

Belongs to the UvrB family. Forms a heterotetramer with UvrA during the search for lesions. Interacts with UvrC in an incision complex.

The protein localises to the cytoplasm. In terms of biological role, the UvrABC repair system catalyzes the recognition and processing of DNA lesions. A damage recognition complex composed of 2 UvrA and 2 UvrB subunits scans DNA for abnormalities. Upon binding of the UvrA(2)B(2) complex to a putative damaged site, the DNA wraps around one UvrB monomer. DNA wrap is dependent on ATP binding by UvrB and probably causes local melting of the DNA helix, facilitating insertion of UvrB beta-hairpin between the DNA strands. Then UvrB probes one DNA strand for the presence of a lesion. If a lesion is found the UvrA subunits dissociate and the UvrB-DNA preincision complex is formed. This complex is subsequently bound by UvrC and the second UvrB is released. If no lesion is found, the DNA wraps around the other UvrB subunit that will check the other stand for damage. The protein is UvrABC system protein B of Oceanobacillus iheyensis (strain DSM 14371 / CIP 107618 / JCM 11309 / KCTC 3954 / HTE831).